Reading from the N-terminus, the 553-residue chain is Ubiquitin carboxyl-terminal hydrolase 17-like protein 15 (553 aa).

Residues 80 to 375 form the USP domain; it reads AGLQNMGNTC…QAYVLFYIQK (296 aa). Residue C89 is the Nucleophile of the active site. The Proton acceptor role is filled by H334. 2 stretches are compositionally biased toward basic and acidic residues: residues 382–392 and 398–413; these read SESVSRGREPR and DTDR…RDHP. 2 disordered regions span residues 382–413 and 491–524; these read SESV…RDHP and STTP…HSKR. Polar residues predominate over residues 496–505; that stretch reads HQESMNTGTL. Residues 510–524 are compositionally biased toward basic residues; it reads GRARRSKGKNKHSKR.

It belongs to the peptidase C19 family. USP17 subfamily.

It is found in the nucleus. The protein localises to the endoplasmic reticulum. It carries out the reaction Thiol-dependent hydrolysis of ester, thioester, amide, peptide and isopeptide bonds formed by the C-terminal Gly of ubiquitin (a 76-residue protein attached to proteins as an intracellular targeting signal).. In terms of biological role, deubiquitinating enzyme that removes conjugated ubiquitin from specific proteins to regulate different cellular processes that may include cell proliferation, progression through the cell cycle, apoptosis, cell migration, and the cellular response to viral infection. This is Ubiquitin carboxyl-terminal hydrolase 17-like protein 15 (USP17L15) from Homo sapiens (Human).